The primary structure comprises 901 residues: Viral-enhancing factor (901 aa).

Positions 27 to 330 constitute a Peptidase M60 domain; the sequence is HRRTEVGVVL…IFTWLYNPQR (304 aa). Residues asparagine 265, asparagine 278, asparagine 339, asparagine 349, asparagine 540, asparagine 594, asparagine 595, asparagine 642, asparagine 683, and asparagine 698 are each glycosylated (N-linked (GlcNAc...) asparagine; by host).

Functionally, involved in disruption of the peritrophic membrane and fusion of nucleocapsids with midgut cells. The chain is Viral-enhancing factor (VEF) from Pseudalatia unipuncta granulosis virus (PuGV).